A 611-amino-acid polypeptide reads, in one-letter code: DNA-directed RNA polymerase subunit Rpo2C (611 aa).

The Zn(2+) site is built by Cys-547, Cys-550, Cys-565, and Cys-568.

Belongs to the RNA polymerase beta chain family. Part of the RNA polymerase complex. Zn(2+) serves as cofactor.

The protein resides in the cytoplasm. The catalysed reaction is RNA(n) + a ribonucleoside 5'-triphosphate = RNA(n+1) + diphosphate. In terms of biological role, DNA-dependent RNA polymerase (RNAP) catalyzes the transcription of DNA into RNA using the four ribonucleoside triphosphates as substrates. The Rpo2 subunit (Rpo2N and Rpo2C in this organism) is implicated in DNA promoter recognition and in nucleotide binding. The polypeptide is DNA-directed RNA polymerase subunit Rpo2C (Methanococcus vannielii (strain ATCC 35089 / DSM 1224 / JCM 13029 / OCM 148 / SB)).